A 396-amino-acid chain; its full sequence is 1-deoxy-D-xylulose 5-phosphate reductoisomerase (396 aa).

NADPH-binding residues include Thr-15, Gly-16, Ser-17, Ile-18, Gly-41, and Asn-130. Position 131 (Lys-131) interacts with 1-deoxy-D-xylulose 5-phosphate. Glu-132 lines the NADPH pocket. Position 155 (Asp-155) interacts with Mn(2+). Residues Ser-156, Glu-157, Ser-181, and His-204 each coordinate 1-deoxy-D-xylulose 5-phosphate. Glu-157 serves as a coordination point for Mn(2+). Residue Gly-210 participates in NADPH binding. 1-deoxy-D-xylulose 5-phosphate contacts are provided by Ser-217, Asn-222, Lys-223, and Glu-226. Glu-226 is a Mn(2+) binding site.

This sequence belongs to the DXR family. The cofactor is Mg(2+). Mn(2+) serves as cofactor.

It carries out the reaction 2-C-methyl-D-erythritol 4-phosphate + NADP(+) = 1-deoxy-D-xylulose 5-phosphate + NADPH + H(+). It participates in isoprenoid biosynthesis; isopentenyl diphosphate biosynthesis via DXP pathway; isopentenyl diphosphate from 1-deoxy-D-xylulose 5-phosphate: step 1/6. Functionally, catalyzes the NADPH-dependent rearrangement and reduction of 1-deoxy-D-xylulose-5-phosphate (DXP) to 2-C-methyl-D-erythritol 4-phosphate (MEP). The polypeptide is 1-deoxy-D-xylulose 5-phosphate reductoisomerase (Bifidobacterium longum (strain NCC 2705)).